Consider the following 179-residue polypeptide: Large ribosomal subunit protein uL5 (179 aa).

It belongs to the universal ribosomal protein uL5 family. As to quaternary structure, part of the 50S ribosomal subunit; part of the 5S rRNA/L5/L18/L25 subcomplex. Contacts the 5S rRNA and the P site tRNA. Forms a bridge to the 30S subunit in the 70S ribosome.

In terms of biological role, this is one of the proteins that bind and probably mediate the attachment of the 5S RNA into the large ribosomal subunit, where it forms part of the central protuberance. In the 70S ribosome it contacts protein S13 of the 30S subunit (bridge B1b), connecting the 2 subunits; this bridge is implicated in subunit movement. Contacts the P site tRNA; the 5S rRNA and some of its associated proteins might help stabilize positioning of ribosome-bound tRNAs. This Burkholderia cenocepacia (strain HI2424) protein is Large ribosomal subunit protein uL5.